Reading from the N-terminus, the 283-residue chain is Large ribosomal subunit protein uL2 (283 aa).

The segment at Arg215 to Asn283 is disordered. Basic residues predominate over residues Ile274–Asn283.

Belongs to the universal ribosomal protein uL2 family. As to quaternary structure, part of the 50S ribosomal subunit. Forms a bridge to the 30S subunit in the 70S ribosome.

Functionally, one of the primary rRNA binding proteins. Required for association of the 30S and 50S subunits to form the 70S ribosome, for tRNA binding and peptide bond formation. It has been suggested to have peptidyltransferase activity; this is somewhat controversial. Makes several contacts with the 16S rRNA in the 70S ribosome. The sequence is that of Large ribosomal subunit protein uL2 from Mycoplasma mobile (strain ATCC 43663 / 163K / NCTC 11711) (Mesomycoplasma mobile).